The following is a 500-amino-acid chain: Probable malate:quinone oxidoreductase (500 aa).

The protein belongs to the MQO family. FAD is required as a cofactor.

It catalyses the reaction (S)-malate + a quinone = a quinol + oxaloacetate. It participates in carbohydrate metabolism; tricarboxylic acid cycle; oxaloacetate from (S)-malate (quinone route): step 1/1. This Bacillus cereus (strain AH187) protein is Probable malate:quinone oxidoreductase.